A 481-amino-acid polypeptide reads, in one-letter code: Cobyric acid synthase (481 aa).

Positions 248-435 (ALTVAWLAFS…LHGMFGSDRF (188 aa)) constitute a GATase cobBQ-type domain. The active-site Nucleophile is Cys-330. His-427 is an active-site residue.

This sequence belongs to the CobB/CobQ family. CobQ subfamily.

It participates in cofactor biosynthesis; adenosylcobalamin biosynthesis. Its function is as follows. Catalyzes amidations at positions B, D, E, and G on adenosylcobyrinic A,C-diamide. NH(2) groups are provided by glutamine, and one molecule of ATP is hydrogenolyzed for each amidation. This Cereibacter sphaeroides (strain ATCC 17025 / ATH 2.4.3) (Rhodobacter sphaeroides) protein is Cobyric acid synthase.